Here is a 437-residue protein sequence, read N- to C-terminus: Phosphomethylpyrimidine synthase (437 aa).

Substrate contacts are provided by residues asparagine 69, methionine 98, tyrosine 127, histidine 163, 185 to 187 (SRG), 226 to 229 (DALR), and glutamate 265. Histidine 269 contacts Zn(2+). Tyrosine 292 contacts substrate. Histidine 333 lines the Zn(2+) pocket. [4Fe-4S] cluster is bound by residues cysteine 409, cysteine 412, and cysteine 416.

This sequence belongs to the ThiC family. [4Fe-4S] cluster is required as a cofactor.

The catalysed reaction is 5-amino-1-(5-phospho-beta-D-ribosyl)imidazole + S-adenosyl-L-methionine = 4-amino-2-methyl-5-(phosphooxymethyl)pyrimidine + CO + 5'-deoxyadenosine + formate + L-methionine + 3 H(+). It participates in cofactor biosynthesis; thiamine diphosphate biosynthesis. Catalyzes the synthesis of the hydroxymethylpyrimidine phosphate (HMP-P) moiety of thiamine from aminoimidazole ribotide (AIR) in a radical S-adenosyl-L-methionine (SAM)-dependent reaction. This Alkaliphilus oremlandii (strain OhILAs) (Clostridium oremlandii (strain OhILAs)) protein is Phosphomethylpyrimidine synthase.